A 233-amino-acid chain; its full sequence is C-type lectin domain family 2 member D6 (233 aa).

The segment at 1–45 is disordered; that stretch reads MPSSAHLQDSPPLLSRTLTQNEGQTSLRQSSSCGPSATSASESLS. Residues 1-73 lie on the Cytoplasmic side of the membrane; it reads MPSSAHLQDS…GIILPESPAK (73 aa). Polar residues predominate over residues 16–29; the sequence is RTLTQNEGQTSLRQ. A compositionally biased stretch (low complexity) spans 30-43; sequence SSSCGPSATSASES. A helical; Signal-anchor for type II membrane protein membrane pass occupies residues 74 to 94; it reads LLCCCAVIVVLSVAVVALSVA. Over 95–233 the chain is Extracellular; sequence LSVKKTPQIS…KLNSYTSQCQ (139 aa). A C-type lectin domain is found at 119-230; that stretch reads VGNKCYYFNE…ICSKLNSYTS (112 aa). Asparagine 132 is a glycosylation site (N-linked (GlcNAc...) asparagine).

It is found in the cell membrane. Functionally, lectin-type cell surface receptor. The protein is C-type lectin domain family 2 member D6 (Clec2d6) of Rattus norvegicus (Rat).